A 273-amino-acid chain; its full sequence is NADH-ubiquinone oxidoreductase 29.9 kDa subunit, mitochondrial (273 aa).

The transit peptide at 1 to 8 directs the protein to the mitochondrion; the sequence is MRAALRLL.

This sequence belongs to the complex I NDUFA5 subunit family. As to quaternary structure, complex I is composed of about 40 different subunits.

The protein localises to the mitochondrion inner membrane. Functionally, accessory subunit of the mitochondrial membrane respiratory chain NADH dehydrogenase (Complex I), that is believed not to be involved in catalysis. Complex I functions in the transfer of electrons from NADH to the respiratory chain. The immediate electron acceptor for the enzyme is believed to be ubiquinone. This Neurospora crassa (strain ATCC 24698 / 74-OR23-1A / CBS 708.71 / DSM 1257 / FGSC 987) protein is NADH-ubiquinone oxidoreductase 29.9 kDa subunit, mitochondrial (nuo-32).